The primary structure comprises 258 residues: Regulatory protein RecX (258 aa).

It belongs to the RecX family.

It localises to the cytoplasm. Modulates RecA activity. The polypeptide is Regulatory protein RecX (Streptococcus equi subsp. equi (strain 4047)).